The following is a 388-amino-acid chain: Chorismate synthase (388 aa).

Positions 39 and 45 each coordinate NADP(+). Residues 130–132 (RSS), 251–252 (NA), Gly-296, 311–315 (KPIPT), and Arg-337 contribute to the FMN site.

This sequence belongs to the chorismate synthase family. As to quaternary structure, homotetramer. The cofactor is FMNH2.

The catalysed reaction is 5-O-(1-carboxyvinyl)-3-phosphoshikimate = chorismate + phosphate. The protein operates within metabolic intermediate biosynthesis; chorismate biosynthesis; chorismate from D-erythrose 4-phosphate and phosphoenolpyruvate: step 7/7. Functionally, catalyzes the anti-1,4-elimination of the C-3 phosphate and the C-6 proR hydrogen from 5-enolpyruvylshikimate-3-phosphate (EPSP) to yield chorismate, which is the branch point compound that serves as the starting substrate for the three terminal pathways of aromatic amino acid biosynthesis. This reaction introduces a second double bond into the aromatic ring system. In Streptococcus uberis (strain ATCC BAA-854 / 0140J), this protein is Chorismate synthase.